The primary structure comprises 235 residues: Large ribosomal subunit protein uL1 (235 aa).

Belongs to the universal ribosomal protein uL1 family. Part of the 50S ribosomal subunit.

Its function is as follows. Binds directly to 23S rRNA. The L1 stalk is quite mobile in the ribosome, and is involved in E site tRNA release. In terms of biological role, protein L1 is also a translational repressor protein, it controls the translation of the L11 operon by binding to its mRNA. The polypeptide is Large ribosomal subunit protein uL1 (Prochlorococcus marinus (strain NATL1A)).